A 642-amino-acid polypeptide reads, in one-letter code: Threonine--tRNA ligase (642 aa).

The region spanning 1–61 (MPVITLPDGS…ENDATLSIIT (61 aa)) is the TGS domain. A catalytic region spans residues 243-534 (DHRKIGKQLD…LTEEFAGFFP (292 aa)). The Zn(2+) site is built by C334, H385, and H511.

Belongs to the class-II aminoacyl-tRNA synthetase family. As to quaternary structure, homodimer. Requires Zn(2+) as cofactor.

The protein localises to the cytoplasm. The enzyme catalyses tRNA(Thr) + L-threonine + ATP = L-threonyl-tRNA(Thr) + AMP + diphosphate + H(+). Catalyzes the attachment of threonine to tRNA(Thr) in a two-step reaction: L-threonine is first activated by ATP to form Thr-AMP and then transferred to the acceptor end of tRNA(Thr). Also edits incorrectly charged L-seryl-tRNA(Thr). The polypeptide is Threonine--tRNA ligase (Salmonella heidelberg (strain SL476)).